The chain runs to 374 residues: Pectate lyase 2 (374 aa).

Positions 1–22 (MKYLLPTAATGLLLLAAQPAVA) are cleaved as a signal peptide. A disulfide bridge links cysteine 93 with cysteine 176. Aspartate 150, aspartate 152, glutamate 187, and aspartate 191 together coordinate Ca(2+). The active site involves arginine 239. A disulfide bridge connects residues cysteine 350 and cysteine 373.

The protein belongs to the polysaccharide lyase 1 family. PLADES subfamily. Requires Ca(2+) as cofactor.

It localises to the secreted. It carries out the reaction Eliminative cleavage of (1-&gt;4)-alpha-D-galacturonan to give oligosaccharides with 4-deoxy-alpha-D-galact-4-enuronosyl groups at their non-reducing ends.. It participates in glycan metabolism; pectin degradation; 2-dehydro-3-deoxy-D-gluconate from pectin: step 2/5. Its function is as follows. Involved in maceration and soft-rotting of plant tissue. The protein is Pectate lyase 2 (pel2) of Pectobacterium atrosepticum (strain SCRI 1043 / ATCC BAA-672) (Erwinia carotovora subsp. atroseptica).